Here is a 1544-residue protein sequence, read N- to C-terminus: MEAQSHSSTTTEKKKVENSIVKCSNRTDVSEKAVASSTTSNEDESPGQTYHRERRNAITMQPQGGQGLSKISEEPSTSSEERASLIKKEIHGSISHLPEPSVPYRGTLVTMDPRNGYMDPHYHPPHLFQAFHPPVPIDARHHEGRYHYEPSPIPPLHVPSALSSSPTYSDLPFIRISPHRNPAAASESPFSTPHPYINPYMDYIRSLHSSPSLSMISAARGLSPTDAPHAGVSPAEYYHQMALLAGQRSPYADIIPSAATAGAGALHMEYLHAMDSTRFPSPRLSARPSRKRTLSISPLSDHSFDLQTMIRTSPNSLVTILNNSCSSWSASGSYGHLSASAISPALSFTYPPTPVSLQQMHQQIISRQQTLGSAFGHSPPLIHPAPTFPTQRPIPGIPSVLNPVQVSSGPSESTQHNKPTSESAVSSTGDPMHNKRSKIKPDEDLPSPGAGSVQEQPEGMTPVKEEGDKDESKQEPEVVYETNCHWEGCSREFDTQEQLVHHINNDHIHGEKKEFVCRWLDCSREQKPFKAQYMLVVHMRRHTGEKPHKCTFEGCTKAYSRLENLKTHLRSHTGEKPYVCEHEGCNKAFSNASDRAKHQNRTHSNEKPYVCKIPGCTKRYTDPSSLRKHVKTVHGPEAHVTKKQRGDIHPRPPPPRDPGSHSQTRSPGQQTQGATGEQKDLNSTTSRREECLQVKAVKSEKPMTSQPSPGGQSTCSSEQSPISNYSNNGIELTLTGGGSVGDLSVIDETPIMDSTISTATTALGLQARRNMTGTKWMEQVKLERLKQVNGMLPRLNPVPPSKAPTLPPLIGNGTQSNSSCSVGGSMTILPNRNELSSTDITVLNMLNRRDSNTSTISSAYLSSRRSSGISPCFSSRRSSDASQAEGRPQNVSVADSYDPISTDASRRSSEASQCDDLPSLLSLTPAQQYRLKAKYAAATGGPPPTPLPNMERMSLKTRMALLGDCRESGISPLPPVNAPRRCSDGGANGYSRRHLLSHDALGNGTRRASDPVRMVSNNLSVPRVQHFNSLNSFNSPALPPSMEKRNLVLQNCTHSEGGVFRGFSSPCPPSISENVTLEAVTMEAGGSLNDEDLLPDDVVQYLNSQNQGTCDHLLNNVLDSNKMHHSVVLGNNNPSSFDRAPPASSQPAGSEVSKSDLPIQWNEVSSGSSDLSPTKLKCSQRSAVQQARAFGLYNNMMVQQQNLQRGNVYQQNGYQNLMENNGSYSLQQNTVLGSGASSSFGMQPNKPYGESVSRQPMIFGAMDSSCGITVQGQKLRSSNMPVSGNQQNFGHPIASSDQATSMANGMQNRNVMEQEYLQNELVGDGIHYQGVNQSSPMTLGQVSPTSQSSLHQGPQSCPPVSHTIGNQSSGLSVAKSYQPCANYSGNRRQNVLRNNLAQQQGHVSDGNQTYRVNTIKLEMQGQSQQFCSNMQNYSGQLYDQTTGFSHQAMKIGSSFFVSEANCLLQETATANSSELLSPGANQVSSTVDSLDSNSLEGVQIDFDAIIDDGDHVSLISGALSPSIIQNLSRNSSRLTTPRASLTFP.

Composition is skewed to polar residues over residues 1 to 10 and 402 to 429; these read MEAQSHSSTT and NPVQ…SSTG. Disordered regions lie at residues 1–83 and 373–477; these read MEAQ…EERA and SAFG…QEPE. Residues 463 to 476 are compositionally biased toward basic and acidic residues; it reads VKEEGDKDESKQEP. The segment at 482 to 509 adopts a C2H2-type 1 zinc-finger fold; the sequence is TNCHWEGCSREFDTQEQLVHHINNDHIH. The segment at 520-542 adopts a C2H2-type 2; degenerate zinc-finger fold; it reads LDCSREQKPFKAQYMLVVHMRRH. 3 consecutive C2H2-type zinc fingers follow at residues 548-572, 578-603, and 609-634; these read HKCT…LRSH, YVCE…NRTH, and YVCK…KTVH. 4 disordered regions span residues 622-728, 865-919, 1126-1155, and 1327-1368; these read DPSS…YSNN, RSSG…DLPS, SVVL…VSKS, and HYQG…GNQS. Positions 634–650 are enriched in basic and acidic residues; that stretch reads HGPEAHVTKKQRGDIHP. A compositionally biased stretch (polar residues) spans 660–685; it reads SHSQTRSPGQQTQGATGEQKDLNSTT. The span at 686-701 shows a compositional bias: basic and acidic residues; that stretch reads SRREECLQVKAVKSEK. Residues 702-728 are compositionally biased toward polar residues; that stretch reads PMTSQPSPGGQSTCSSEQSPISNYSNN. Positions 865–882 are enriched in low complexity; it reads RSSGISPCFSSRRSSDAS. Residues 1330 to 1355 are compositionally biased toward polar residues; that stretch reads GVNQSSPMTLGQVSPTSQSSLHQGPQ.

It belongs to the GLI C2H2-type zinc-finger protein family. In terms of processing, phosphorylation is essential for its proteolytic processing. Post-translationally, the repressor form (GLI3R), a C-terminally truncated form is generated from the full-length GLI3 protein (GLI3FL) through proteolytic processing.

Its subcellular location is the nucleus. It localises to the cytoplasm. In terms of biological role, has a dual function as a transcriptional activator and a repressor of the sonic hedgehog (Shh) pathway, and plays a role in limb development. The full-length GLI3 form (GLI3FL) acts as an activator (GLI3A) while GLI3R, its C-terminally truncated form, acts as a repressor. The protein is Transcriptional activator GLI3 (GLI3) of Gallus gallus (Chicken).